The following is a 562-amino-acid chain: NAD-dependent malic enzyme (562 aa).

Y101 acts as the Proton donor in catalysis. R154 is a binding site for NAD(+). Catalysis depends on K172, which acts as the Proton acceptor. Residues E243, D244, and D267 each contribute to the a divalent metal cation site. D267 and N415 together coordinate NAD(+).

Belongs to the malic enzymes family. In terms of assembly, homotetramer. It depends on Mg(2+) as a cofactor. Requires Mn(2+) as cofactor.

The enzyme catalyses (S)-malate + NAD(+) = pyruvate + CO2 + NADH. The catalysed reaction is oxaloacetate + H(+) = pyruvate + CO2. In Vibrio parahaemolyticus serotype O3:K6 (strain RIMD 2210633), this protein is NAD-dependent malic enzyme.